Reading from the N-terminus, the 333-residue chain is Sphingomyelinase C (333 aa).

Positions 1 to 26 (MKGKLLKGVLSLGVGLGALYSGTSAQ) are cleaved as a signal peptide. An intrachain disulfide couples Cys-150 to Cys-186.

It belongs to the neutral sphingomyelinase family. Requires Mg(2+) as cofactor. The N-terminus is blocked.

It is found in the secreted. It carries out the reaction a sphingomyelin + H2O = phosphocholine + an N-acylsphing-4-enine + H(+). Its activity is regulated as follows. Activated by cobalt and manganese ions. Required, with sphingomyelinase, to effect target cell lysis (hemolysis). The protein is Sphingomyelinase C (cerB) of Bacillus cereus.